We begin with the raw amino-acid sequence, 890 residues long: tRNase Z TRZ3, mitochondrial (890 aa).

The transit peptide at 1–44 (MINSMPYLHKNLRLLRLLSSKSSPFPLSLRPFSPRSFSLSTLFS) directs the protein to the mitochondrion. Residues 46 to 67 (SSSSSSMENNEATNGSKSSSNS) form a disordered region.

It belongs to the RNase Z family. Homodimer. Zn(2+) is required as a cofactor. The cofactor is Ca(2+). It depends on Mn(2+) as a cofactor. Mg(2+) serves as cofactor.

The protein resides in the mitochondrion. The protein localises to the nucleus. It carries out the reaction Endonucleolytic cleavage of RNA, removing extra 3' nucleotides from tRNA precursor, generating 3' termini of tRNAs. A 3'-hydroxy group is left at the tRNA terminus and a 5'-phosphoryl group is left at the trailer molecule.. In terms of biological role, zinc phosphodiesterase, which displays tRNA 3'-processing endonuclease activity. Involved in tRNA maturation, by removing a 3'-trailer from precursor tRNA. Can process the mitochondrial tRNA-like structures (t-elements). Involved in the processing of small nucleolar RNAs (snoRNAs). The sequence is that of tRNase Z TRZ3, mitochondrial from Arabidopsis thaliana (Mouse-ear cress).